The chain runs to 555 residues: Formate--tetrahydrofolate ligase (555 aa).

An ATP-binding site is contributed by 65 to 72; it reads TPAGEGKS.

It belongs to the formate--tetrahydrofolate ligase family.

It catalyses the reaction (6S)-5,6,7,8-tetrahydrofolate + formate + ATP = (6R)-10-formyltetrahydrofolate + ADP + phosphate. The protein operates within one-carbon metabolism; tetrahydrofolate interconversion. In Lactococcus lactis subsp. lactis (strain IL1403) (Streptococcus lactis), this protein is Formate--tetrahydrofolate ligase.